Here is a 582-residue protein sequence, read N- to C-terminus: Sulfite reductase [NADPH] hemoprotein beta-component (582 aa).

Over residues 1–12 (MDLKVKVDRSRD) the composition is skewed to basic and acidic residues. The tract at residues 1–26 (MDLKVKVDRSRDVSQPLDKLGPDETL) is disordered. C447, C453, C492, and C496 together coordinate [4Fe-4S] cluster. C496 is a binding site for siroheme.

Belongs to the nitrite and sulfite reductase 4Fe-4S domain family. Alpha(8)-beta(8). The alpha component is a flavoprotein, the beta component is a hemoprotein. Siroheme serves as cofactor. [4Fe-4S] cluster is required as a cofactor.

It catalyses the reaction hydrogen sulfide + 3 NADP(+) + 3 H2O = sulfite + 3 NADPH + 4 H(+). The protein operates within sulfur metabolism; hydrogen sulfide biosynthesis; hydrogen sulfide from sulfite (NADPH route): step 1/1. Functionally, component of the sulfite reductase complex that catalyzes the 6-electron reduction of sulfite to sulfide. This is one of several activities required for the biosynthesis of L-cysteine from sulfate. In Afipia carboxidovorans (strain ATCC 49405 / DSM 1227 / KCTC 32145 / OM5) (Oligotropha carboxidovorans), this protein is Sulfite reductase [NADPH] hemoprotein beta-component.